The chain runs to 148 residues: MYFAIRLSFVLAVLFCLTGNGSARMLDADRNRLQQLQIRSQQSTDANTQVDIAYEVIGIYDKYKGQGGSNVLREAQLNSQVNDFKRKTMVIDGVPAQGGVWGILGAIKKAADAVPDNVKKDAENLVKSSTKVLVRGIYDYLMGKMKQH.

Positions 1-23 (MYFAIRLSFVLAVLFCLTGNGSA) are cleaved as a signal peptide.

Belongs to the Turandot family.

It localises to the secreted. Its function is as follows. A humoral factor that may play a role in stress tolerance. The sequence is that of Protein Turandot Z from Drosophila sechellia (Fruit fly).